Reading from the N-terminus, the 288-residue chain is Formamidopyrimidine-DNA glycosylase (288 aa).

The active-site Schiff-base intermediate with DNA is Pro2. Glu3 acts as the Proton donor in catalysis. Catalysis depends on Lys58, which acts as the Proton donor; for beta-elimination activity. The DNA site is built by His101, Arg124, and Arg169. The segment at 254 to 288 adopts an FPG-type zinc-finger fold; the sequence is LVYDRAGLPCRVCGTPIRQIVQGQRSTFYCPACQR. Residue Arg278 is the Proton donor; for delta-elimination activity of the active site.

It belongs to the FPG family. Monomer. Zn(2+) is required as a cofactor.

It carries out the reaction Hydrolysis of DNA containing ring-opened 7-methylguanine residues, releasing 2,6-diamino-4-hydroxy-5-(N-methyl)formamidopyrimidine.. It catalyses the reaction 2'-deoxyribonucleotide-(2'-deoxyribose 5'-phosphate)-2'-deoxyribonucleotide-DNA = a 3'-end 2'-deoxyribonucleotide-(2,3-dehydro-2,3-deoxyribose 5'-phosphate)-DNA + a 5'-end 5'-phospho-2'-deoxyribonucleoside-DNA + H(+). Its function is as follows. Involved in base excision repair of DNA damaged by oxidation or by mutagenic agents. Acts as a DNA glycosylase that recognizes and removes damaged bases. Has a preference for oxidized purines, such as 7,8-dihydro-8-oxoguanine (8-oxoG). Has AP (apurinic/apyrimidinic) lyase activity and introduces nicks in the DNA strand. Cleaves the DNA backbone by beta-delta elimination to generate a single-strand break at the site of the removed base with both 3'- and 5'-phosphates. The protein is Formamidopyrimidine-DNA glycosylase of Ralstonia nicotianae (strain ATCC BAA-1114 / GMI1000) (Ralstonia solanacearum).